The chain runs to 383 residues: Histidine decarboxylase (383 aa).

His-120 contributes to the substrate binding site. Lys-233 carries the post-translational modification N6-(pyridoxal phosphate)lysine.

It belongs to the group II decarboxylase family. In terms of assembly, homotetramer. Requires pyridoxal 5'-phosphate as cofactor.

The catalysed reaction is L-histidine + H(+) = histamine + CO2. This is Histidine decarboxylase from Acinetobacter baumannii (strain AB307-0294).